The chain runs to 87 residues: MKFYLVLAFLTLCAVAVTALPAGDETRIDLETLEEDLRLVDGAQVTGELKRDKRVTCNIGEWVCVAHCNSKSKKSGYCSRGVCYCTN.

The N-terminal stretch at 1 to 19 (MKFYLVLAFLTLCAVAVTA) is a signal peptide. Positions 20 to 44 (LPAGDETRIDLETLEEDLRLVDGAQ) are excised as a propeptide. Cystine bridges form between C57–C78, C64–C83, and C68–C85.

As to expression, hemolymph and fat body.

Its subcellular location is the secreted. In terms of biological role, antibacterial peptide mostly active against Gram-positive and Gram negative bacteria. This is Defensin-A from Glossina morsitans morsitans (Savannah tsetse fly).